The chain runs to 605 residues: Elongation factor 4 (605 aa).

The 183-residue stretch at 8–190 (RRVRNFCIVA…AIITRIPPPQ (183 aa)) folds into the tr-type G domain. GTP is bound by residues 20-25 (DHGKST) and 137-140 (NKID).

This sequence belongs to the TRAFAC class translation factor GTPase superfamily. Classic translation factor GTPase family. LepA subfamily.

The protein localises to the cell inner membrane. The catalysed reaction is GTP + H2O = GDP + phosphate + H(+). Required for accurate and efficient protein synthesis under certain stress conditions. May act as a fidelity factor of the translation reaction, by catalyzing a one-codon backward translocation of tRNAs on improperly translocated ribosomes. Back-translocation proceeds from a post-translocation (POST) complex to a pre-translocation (PRE) complex, thus giving elongation factor G a second chance to translocate the tRNAs correctly. Binds to ribosomes in a GTP-dependent manner. The chain is Elongation factor 4 from Treponema pallidum (strain Nichols).